Here is a 655-residue protein sequence, read N- to C-terminus: Chaperone protein DnaK 3 (655 aa).

At Thr197 the chain carries Phosphothreonine; by autocatalysis.

This sequence belongs to the heat shock protein 70 family.

Acts as a chaperone. In Synechococcus sp. (strain ATCC 27144 / PCC 6301 / SAUG 1402/1) (Anacystis nidulans), this protein is Chaperone protein DnaK 3.